A 321-amino-acid chain; its full sequence is Protein-L-histidine N-pros-methyltransferase (321 aa).

An N-terminal signal peptide occupies residues 1-24; it reads MRLWLCWLGCYTLLLWALRRRMWA. Asn89 is a glycosylation site (N-linked (GlcNAc...) asparagine). The S-adenosyl-L-homocysteine site is built by Glu177, Asn213, and Tyr298.

This sequence belongs to the METTL9 family.

The protein resides in the endoplasmic reticulum. Its subcellular location is the mitochondrion. The catalysed reaction is L-histidyl-[protein] + S-adenosyl-L-methionine = N(pros)-methyl-L-histidyl-[protein] + S-adenosyl-L-homocysteine + H(+). Its function is as follows. Protein-histidine N-methyltransferase that specifically catalyzes 1-methylhistidine (pros-methylhistidine) methylation of target proteins. Mediates methylation of proteins with a His-x-His (HxH) motif (where 'x' is preferably a small amino acid); 1-methylhistidine modification may affect the binding of zinc and other metals to its target proteins. This chain is Protein-L-histidine N-pros-methyltransferase, found in Gallus gallus (Chicken).